The chain runs to 983 residues: ABC transporter A family member 2 (983 aa).

6 helical membrane passes run 33-53 (FLQL…QAAM), 221-241 (IVAL…FGFV), 279-299 (ILTA…QFDF), 305-325 (FPVV…LAFM), 339-359 (VGFF…SGFP), and 416-436 (VLTI…WFVL). One can recognise an ABC transporter domain in the interval 518 to 763 (VQIRGLAKTY…FGTGFIANIS (246 aa)). 564–571 (GPNGAGKT) serves as a coordination point for ATP. Residues 963–983 (RSGSTSSRRFSRSGSSRRFSS) are disordered.

It belongs to the ABC transporter superfamily. ABCA family. CPR flippase (TC 3.A.1.211) subfamily.

It is found in the membrane. The sequence is that of ABC transporter A family member 2 (ABCA2) from Arabidopsis thaliana (Mouse-ear cress).